The primary structure comprises 366 residues: Histidinol-phosphate aminotransferase (366 aa).

Lys-228 carries the N6-(pyridoxal phosphate)lysine modification.

This sequence belongs to the class-II pyridoxal-phosphate-dependent aminotransferase family. Histidinol-phosphate aminotransferase subfamily. Homodimer. It depends on pyridoxal 5'-phosphate as a cofactor.

It catalyses the reaction L-histidinol phosphate + 2-oxoglutarate = 3-(imidazol-4-yl)-2-oxopropyl phosphate + L-glutamate. It participates in amino-acid biosynthesis; L-histidine biosynthesis; L-histidine from 5-phospho-alpha-D-ribose 1-diphosphate: step 7/9. The protein is Histidinol-phosphate aminotransferase of Corynebacterium diphtheriae (strain ATCC 700971 / NCTC 13129 / Biotype gravis).